A 462-amino-acid polypeptide reads, in one-letter code: uncharacterized protein (462 aa).

This is an uncharacterized protein from Acanthamoeba polyphaga (Amoeba).